Consider the following 421-residue polypeptide: Putative NBPF family member NBPF7 (421 aa).

A coiled-coil region spans residues Ile87–Leu143. Disordered regions lie at residues Val179 to Ser251, Glu312 to Ser334, and Tyr402 to Asp421. Olduvai domains are found at residues Glu190–Leu279 and Glu280–Gln391. Over residues Asp194 to Lys217 the composition is skewed to basic and acidic residues. Residues Thr230–Pro243 show a composition bias toward polar residues. A compositionally biased stretch (basic and acidic residues) spans Glu312–Val333. The span at Asn403 to Asp421 shows a compositional bias: polar residues.

The protein belongs to the NBPF family.

It localises to the cytoplasm. This Homo sapiens (Human) protein is Putative NBPF family member NBPF7.